A 329-amino-acid chain; its full sequence is Carbohydrate sulfotransferase chst-1 (329 aa).

Over 1–3 (MLK) the chain is Cytoplasmic. The helical; Signal-anchor for type II membrane protein transmembrane segment at 4 to 23 (WFIISCCLLTAISYSTYYLF) threads the bilayer. At 24 to 329 (TSNSWIKTVK…FDFDTTFINS (306 aa)) the chain is on the lumenal side. Residues 91–97 (KKSMSTL) and 157–165 (RDPIARFIS) contribute to the 3'-phosphoadenylyl sulfate site.

This sequence belongs to the sulfotransferase 2 family. In terms of tissue distribution, highly expressed in the head and tail of hermaphrodites, in particular in amphid and phasmid sheath cells.

It is found in the golgi apparatus membrane. It carries out the reaction chondroitin beta-D-glucuronate + n 3'-phosphoadenylyl sulfate = chondroitin 4'-sulfate + n adenosine 3',5'-bisphosphate + n H(+). In terms of biological role, catalyzes the transfer of sulfate to position 4 of non-reducing N-acetylgalactosamine (GalNAc) residue of chondroitin. The polypeptide is Carbohydrate sulfotransferase chst-1 (Caenorhabditis elegans).